Consider the following 504-residue polypeptide: MWVLYLPAVLSVLIVTLYLYFTRTFNYWKKRNVRGPEPTVFFGNLKDSTLRKKNIGIVMEEIYNQFPYEKVVGMYRMTTPCLLVRDFHVIKHIMIKDFEAFRDRGVEFSKEGLGQNLFHADGETWRALRNRFTPIFTSGKLKNMFYLMHEGADNFIDHVSKECEKKQEFEVHSLLQTYTMSTISSCAFGVSYNSISDKVQTLEIVDKIISEPSYAIELDYMYPKLLAKLNLSIIPTPVQHFFKSLVDNIISQRNGKPAGRNDFMDLILELRQMGEVTSNKYLDGVTSLEITDEVICAQAFVFYVAGYETSATTMSYLIYQLSLNQDVQNKLIAEVDEAIKASDGKVTYDTVKEMKYLNKVFDETLRMYSIVEPLQRKATRDYQIPGTDVVIEKDTMVLISPRGIHYDPKYYDNPKQFNPDRFDAEEVGKRHPCAYLPFGLGQRNCIGMRFGRLQSLLCITKILSKFRIEPSKNTDRNLQVEPRRVTIGPKGGIRVNIVPRKIVS.

Cys445 provides a ligand contact to heme.

The protein belongs to the cytochrome P450 family. Requires heme as cofactor.

Its subcellular location is the endoplasmic reticulum membrane. The protein localises to the microsome membrane. It catalyses the reaction an organic molecule + reduced [NADPH--hemoprotein reductase] + O2 = an alcohol + oxidized [NADPH--hemoprotein reductase] + H2O + H(+). The sequence is that of Cytochrome P450 6B7 (CYP6B7) from Helicoverpa armigera (Cotton bollworm).